The primary structure comprises 868 residues: Leucine--tRNA ligase (868 aa).

A 'HIGH' region motif is present at residues 42–52 (PYPSGKLHMGH). A 'KMSKS' region motif is present at residues 627–631 (KMSKS). Lysine 630 lines the ATP pocket.

This sequence belongs to the class-I aminoacyl-tRNA synthetase family.

The protein resides in the cytoplasm. The enzyme catalyses tRNA(Leu) + L-leucine + ATP = L-leucyl-tRNA(Leu) + AMP + diphosphate. The polypeptide is Leucine--tRNA ligase (Pseudomonas syringae pv. tomato (strain ATCC BAA-871 / DC3000)).